A 237-amino-acid polypeptide reads, in one-letter code: Ribonuclease PH (237 aa).

Residues arginine 86 and glycine 124–arginine 126 contribute to the phosphate site.

Belongs to the RNase PH family. Homohexameric ring arranged as a trimer of dimers.

It catalyses the reaction tRNA(n+1) + phosphate = tRNA(n) + a ribonucleoside 5'-diphosphate. In terms of biological role, phosphorolytic 3'-5' exoribonuclease that plays an important role in tRNA 3'-end maturation. Removes nucleotide residues following the 3'-CCA terminus of tRNAs; can also add nucleotides to the ends of RNA molecules by using nucleoside diphosphates as substrates, but this may not be physiologically important. Probably plays a role in initiation of 16S rRNA degradation (leading to ribosome degradation) during starvation. The sequence is that of Ribonuclease PH from Methylorubrum extorquens (strain PA1) (Methylobacterium extorquens).